A 358-amino-acid chain; its full sequence is Aminomethyltransferase (358 aa).

The protein belongs to the GcvT family. In terms of assembly, the glycine cleavage system is composed of four proteins: P, T, L and H.

It carries out the reaction N(6)-[(R)-S(8)-aminomethyldihydrolipoyl]-L-lysyl-[protein] + (6S)-5,6,7,8-tetrahydrofolate = N(6)-[(R)-dihydrolipoyl]-L-lysyl-[protein] + (6R)-5,10-methylene-5,6,7,8-tetrahydrofolate + NH4(+). Functionally, the glycine cleavage system catalyzes the degradation of glycine. The polypeptide is Aminomethyltransferase (Francisella tularensis subsp. holarctica (strain FTNF002-00 / FTA)).